The following is a 167-amino-acid chain: Large ribosomal subunit protein uL10 (167 aa).

It belongs to the universal ribosomal protein uL10 family. Part of the ribosomal stalk of the 50S ribosomal subunit. The N-terminus interacts with L11 and the large rRNA to form the base of the stalk. The C-terminus forms an elongated spine to which L12 dimers bind in a sequential fashion forming a multimeric L10(L12)X complex.

Its function is as follows. Forms part of the ribosomal stalk, playing a central role in the interaction of the ribosome with GTP-bound translation factors. This Streptococcus mutans serotype c (strain ATCC 700610 / UA159) protein is Large ribosomal subunit protein uL10.